A 281-amino-acid chain; its full sequence is UPF0500 protein C1orf216 homolog (281 aa).

Over residues 1–12 (MFTIQKPDTVSH) the composition is skewed to polar residues. The segment at 1–197 (MFTIQKPDTV…SSSDSDSISV (197 aa)) is disordered. The segment covering 45–74 (TYDKNENWSQDKKGGEEGENKSKSEDEHSS) has biased composition (basic and acidic residues). Composition is skewed to low complexity over residues 92 to 102 (STGSEGISLSS), 147 to 161 (SSSLSIDSPDSVSAS), and 169 to 178 (PAPTTTPQEN). Acidic residues predominate over residues 179–190 (PETEDSDVESSS). Residues 198 to 257 (TLSEAFQSLQDKEKLKEREKEKHHAQLTMYRRLALLRWIRALQQKVRDQQNRLQESFDTI) adopt a coiled-coil conformation.

The protein belongs to the UPF0500 family.

The protein is UPF0500 protein C1orf216 homolog of Xenopus laevis (African clawed frog).